A 571-amino-acid chain; its full sequence is Cilia- and flagella-associated protein 52 (571 aa).

WD repeat units follow at residues 62-106, 109-150, 156-195, 288-327, 330-364, 366-405, 410-449, 451-490, 494-533, and 536-571; these read GHGN…LLAR, LHKG…AICG, LNVG…RKIW, QSQG…ETLI, CHFE…TSSN, AHRI…QKLE, EHKS…RNQM, LANT…VIRE, SLSG…VTHV, and GHSG…PYTS.

The protein belongs to the CFAP52 family. As to quaternary structure, microtubule inner protein component of sperm flagellar doublet microtubules. Interacts with BRCA2. Interacts with the CCT chaperonin complex. Interacts with HSP70. Interacts with AK8. Interacts with CFAP45. Interacts with DNAI1. Interacts with IQDC.

The protein resides in the cytoplasm. The protein localises to the cytoskeleton. Its subcellular location is the cilium axoneme. It is found in the flagellum axoneme. Functionally, microtubule inner protein (MIP) part of the dynein-decorated doublet microtubules (DMTs) in cilia axoneme. Important for proper ciliary and flagellar beating. May act in cooperation with CFAP45 and axonemal dynein subunit DNAH11. May play a role in cell growth and/or survival. In Macaca fascicularis (Crab-eating macaque), this protein is Cilia- and flagella-associated protein 52.